Reading from the N-terminus, the 233-residue chain is Probable chemoreceptor glutamine deamidase CheD (233 aa).

The protein belongs to the CheD family.

It catalyses the reaction L-glutaminyl-[protein] + H2O = L-glutamyl-[protein] + NH4(+). Probably deamidates glutamine residues to glutamate on methyl-accepting chemotaxis receptors (MCPs), playing an important role in chemotaxis. This chain is Probable chemoreceptor glutamine deamidase CheD, found in Vibrio cholerae serotype O1 (strain ATCC 39315 / El Tor Inaba N16961).